The primary structure comprises 358 residues: MTGQRAEKPVLRVLGGEAVWPPPVWLMRQAGRYLPEYRKLREKAGNFIALCTTPPLATEVTLQPVRRFGMDAAILFSDILILPWALGQKLRFAEGEGPRLERIDGLAGLEALDPAALRQGTEPVMETVSRVRAELPPETTLIGFAGSPFTVACYMIDGRGGDFPLTREVAYADPALLAAVIETVTTATIDYLSWQIEAGADCVMLFDSWAGLLPPDLFRAHVIHPTARIVEQLRVRHPGVKVIGFPRLGGLMTLPYIADTGVDAVGMDTSVDPVALARLAPRRVAFQGNLDPLLLRAGGISLGQAVERIARGLEGHPHIFNLGHGIVPDTPPEHVAAVIERLRSLEPGELEESALAAT.

Residues 28–32, aspartate 78, tyrosine 154, serine 208, and histidine 324 each bind substrate; that span reads RQAGR.

Belongs to the uroporphyrinogen decarboxylase family. In terms of assembly, homodimer.

It is found in the cytoplasm. It carries out the reaction uroporphyrinogen III + 4 H(+) = coproporphyrinogen III + 4 CO2. The protein operates within porphyrin-containing compound metabolism; protoporphyrin-IX biosynthesis; coproporphyrinogen-III from 5-aminolevulinate: step 4/4. Its function is as follows. Catalyzes the decarboxylation of four acetate groups of uroporphyrinogen-III to yield coproporphyrinogen-III. This is Uroporphyrinogen decarboxylase from Acidiphilium cryptum (strain JF-5).